We begin with the raw amino-acid sequence, 425 residues long: Spermatogenesis- and oogenesis-specific basic helix-loop-helix-containing protein 2 (425 aa).

One can recognise a bHLH domain in the interval 201 to 252 (KISLLHSSKEKLRRERIKYCCEQLRTLLPYVKGRKNDAASVLEATVDYVKYI).

As to quaternary structure, forms both hetero- and homodimers with SOHLH1.

The protein resides in the nucleus. The protein localises to the cytoplasm. Functionally, transcription regulator of both male and female germline differentiation. Suppresses genes involved in spermatogonial stem cells maintenance, and induces genes important for spermatogonial differentiation. Coordinates oocyte differentiation without affecting meiosis I. The polypeptide is Spermatogenesis- and oogenesis-specific basic helix-loop-helix-containing protein 2 (SOHLH2) (Homo sapiens (Human)).